A 198-amino-acid polypeptide reads, in one-letter code: Photosystem I assembly protein Ycf4 (198 aa).

The interval 1–20 is disordered; the sequence is MTASTTINKGDSPNGDSSAS. 2 helical membrane-spanning segments follow: residues 38–58 and 78–98; these read WASI…SSYL and LVMG…WLAI.

Belongs to the Ycf4 family.

It is found in the cellular thylakoid membrane. In terms of biological role, seems to be required for the assembly of the photosystem I complex. This chain is Photosystem I assembly protein Ycf4, found in Trichormus variabilis (strain ATCC 29413 / PCC 7937) (Anabaena variabilis).